The following is a 344-amino-acid chain: Phosphoribosylformylglycinamidine cyclo-ligase (344 aa).

The protein belongs to the AIR synthase family.

The protein localises to the cytoplasm. It catalyses the reaction 2-formamido-N(1)-(5-O-phospho-beta-D-ribosyl)acetamidine + ATP = 5-amino-1-(5-phospho-beta-D-ribosyl)imidazole + ADP + phosphate + H(+). It functions in the pathway purine metabolism; IMP biosynthesis via de novo pathway; 5-amino-1-(5-phospho-D-ribosyl)imidazole from N(2)-formyl-N(1)-(5-phospho-D-ribosyl)glycinamide: step 2/2. In Exiguobacterium sibiricum (strain DSM 17290 / CCUG 55495 / CIP 109462 / JCM 13490 / 255-15), this protein is Phosphoribosylformylglycinamidine cyclo-ligase.